Reading from the N-terminus, the 390-residue chain is MLKPKDLCPRAGTRTFLEAMQAGKVHLARFVLDALDRSIIDCRAEQGRTPLMVAVGLPDPAMRSRFVRLLLEQGAAVNLRDERGRTALSLACERGHLDAVQLLVQFSGDPEATDSAGNSPVMWAAACGHGAVLEFLVRSFRRLGLRLDRTNRAGLTALQLAASRGHGTCVQALTGPWGRAAAAAAARGSNSDSPPGHPAPAPSPERRRPSPRRLPRPLLARFARAAGGHGHGHGHGHGHGGELASAGKGSVRYRAQGNERPELGRSMSLALGTMTEEETARLRAGALMARPNSPQSSGSGRWRSQEVLEGAPLALMQAPVGLSPHPEGCPGSGRLGLRRRSTAPDIPSLVGEASGPESGPELENNALPFSVPGPKPWQAGTEAVVLQAQR.

5 ANK repeats span residues 11–40, 46–79, 83–112, 116–145, and 153–182; these read AGTR…RSII, QGRT…AVNL, RGRT…DPEA, AGNS…RLGL, and AGLT…RAAA. Disordered regions lie at residues 181–213 and 226–245; these read AAAA…SPRR and AGGH…ELAS. Position 193 is a phosphoserine (serine 193). At serine 304 the chain carries Phosphoserine. The interval 320–377 is disordered; that stretch reads VGLSPHPEGCPGSGRLGLRRRSTAPDIPSLVGEASGPESGPELENNALPFSVPGPKPW.

This is Ankyrin repeat domain-containing protein 63 from Mus musculus (Mouse).